A 450-amino-acid polypeptide reads, in one-letter code: Protein DA1-related 3 (450 aa).

Residues M1–Q46 adopt a coiled-coil conformation. Basic and acidic residues-rich tracts occupy residues K27 to V47 and T56 to V69. The tract at residues K27–G87 is disordered.

The sequence is that of Protein DA1-related 3 (DAR3) from Arabidopsis thaliana (Mouse-ear cress).